A 184-amino-acid chain; its full sequence is Putative NAD(P)H nitroreductase HI_1542 (184 aa).

Residues 10 to 12, Arg35, and His39 each bind FMN; that span reads RKS. 122 to 127 contributes to the NAD(+) binding site; that stretch reads AAQAQG. Residue 132–134 coordinates FMN; the sequence is WIS.

The protein belongs to the nitroreductase family. Homodimer. The cofactor is FMN.

The polypeptide is Putative NAD(P)H nitroreductase HI_1542 (Haemophilus influenzae (strain ATCC 51907 / DSM 11121 / KW20 / Rd)).